Reading from the N-terminus, the 613-residue chain is Protein starmaker (613 aa).

An N-terminal signal peptide occupies residues M1 to S20. The interval F42–S613 is disordered. Basic and acidic residues-rich tracts occupy residues D62–A72, S117–D132, D147–G193, S206–D284, and D291–S449. Acidic residues predominate over residues D450 to S465. Composition is skewed to basic and acidic residues over residues S467 to S482, D509 to S521, and D538 to K554. The segment covering T555–D573 has biased composition (acidic residues). The segment covering D574–K607 has biased composition (basic and acidic residues).

It localises to the secreted. Essential for the formation of otoliths in the inner ear of developing larvae and for the perception of gravity and acceleration. May be one of the organic components of the ortholiths. The chain is Protein starmaker (stm) from Danio rerio (Zebrafish).